The sequence spans 311 residues: Putative dihydroorotate dehydrogenase A (fumarate) (311 aa).

Substrate-binding positions include lysine 45, 69–73 (NSMGL), and asparagine 128. 45–46 (KT) lines the FMN pocket. Asparagine 128 serves as a coordination point for FMN. Catalysis depends on cysteine 131, which acts as the Nucleophile. Positions 165 and 193 each coordinate FMN. Substrate is bound at residue 194–195 (NS). FMN is bound by residues glycine 220, 248–249 (GG), and 270–271 (GT).

This sequence belongs to the dihydroorotate dehydrogenase family. Type 1 subfamily. In terms of assembly, homodimer. The cofactor is FMN.

Its subcellular location is the cytoplasm. The enzyme catalyses (S)-dihydroorotate + fumarate = orotate + succinate. Its pathway is pyrimidine metabolism; UMP biosynthesis via de novo pathway. Catalyzes the conversion of dihydroorotate to orotate with fumarate as the electron acceptor. This chain is Putative dihydroorotate dehydrogenase A (fumarate) (pyrD), found in Streptococcus pyogenes serotype M3 (strain SSI-1).